Consider the following 591-residue polypeptide: Aspartate--tRNA ligase (591 aa).

Residue Glu-173 participates in L-aspartate binding. The interval 197 to 200 (QLFK) is aspartate. Residue Arg-219 coordinates L-aspartate. Residues 219–221 (RDE) and Gln-228 each bind ATP. His-448 serves as a coordination point for L-aspartate. ATP is bound at residue Glu-482. An L-aspartate-binding site is contributed by Arg-489. 534 to 537 (GLDR) contributes to the ATP binding site.

The protein belongs to the class-II aminoacyl-tRNA synthetase family. Type 1 subfamily. As to quaternary structure, homodimer.

Its subcellular location is the cytoplasm. The enzyme catalyses tRNA(Asp) + L-aspartate + ATP = L-aspartyl-tRNA(Asp) + AMP + diphosphate. Functionally, catalyzes the attachment of L-aspartate to tRNA(Asp) in a two-step reaction: L-aspartate is first activated by ATP to form Asp-AMP and then transferred to the acceptor end of tRNA(Asp). The protein is Aspartate--tRNA ligase of Shewanella oneidensis (strain ATCC 700550 / JCM 31522 / CIP 106686 / LMG 19005 / NCIMB 14063 / MR-1).